The following is a 159-amino-acid chain: Immunoglobulin J chain (159 aa).

A signal peptide spans 1-22 (MKNHLLFWGVLAVFIKAVHVKA). A Pyrrolidone carboxylic acid modification is found at Gln23. Disulfide bonds link Cys35-Cys123, Cys94-Cys114, and Cys131-Cys156. N-linked (GlcNAc...) (complex) asparagine glycosylation occurs at Asn71.

Part of the secretory IgA (sIgA) complex that consists of two, four or five IgA monomers, and two additional non-Ig polypeptides, namely the JCHAIN and the secretory component (the proteolytic product of PIGR). Part of the secretory IgM (sIgM) complex that consists of five IgM monomers, and two additional non-Ig polypeptides, namely the JCHAIN and the secretory component (the proteolytic product of PIGR). JCHAIN-containing IgM interacts (via CH4 domain) with FCRM (via Ig-like domain).

It is found in the secreted. Serves to link two monomer units of either IgM or IgA. In the case of IgM, the J chain-joined dimer is a nucleating unit for the IgM pentamer, and in the case of IgA it induces dimers and/or larger polymers. It also helps to bind these immunoglobulins to secretory component. The chain is Immunoglobulin J chain from Homo sapiens (Human).